Consider the following 460-residue polypeptide: UDP-glycosyltransferase 74B1 (460 aa).

His-22 acts as the Proton acceptor in catalysis. His-22 serves as a coordination point for an anthocyanidin. Asp-113 functions as the Charge relay in the catalytic mechanism. 9 residues coordinate UDP-alpha-D-glucose: Thr-135, Gln-339, His-354, Trp-357, Asn-358, Ser-359, Glu-362, Asp-378, and Gln-379.

The protein belongs to the UDP-glycosyltransferase family. As to expression, expressed in the vasculature, the apical meristems of roots, shoots and inflorescence, and the junction of organ or branches.

The catalysed reaction is (Z)-2-phenyl-1-thioacetohydroximate + UDP-alpha-D-glucose = (Z)-desulfoglucotropeolin + UDP. It carries out the reaction a (Z)-omega-(methylsulfanyl)alkyl-thiohydroximate + UDP-alpha-D-glucose = an aliphatic (Z)-desulfo-glucosinolate + UDP. It catalyses the reaction (Z)-2-(indol-3-yl)-1-thioacetohydroximate + UDP-alpha-D-glucose = (Z)-indolylmethyl desulfoglucosinolate + UDP. Its function is as follows. Involved in the biosynthesis of glucosinolate. In in vitro assay, may use phenylacetothiohydroximate (PATH), but not phenylacetic acid (PAA), indole-3-acetic acid (IAA) or salicylic acid (SA) as substrate. Specific for the thiohydroximate functional group and does not glucosylate the carboxylate group or a hydroxyl group. This Arabidopsis thaliana (Mouse-ear cress) protein is UDP-glycosyltransferase 74B1 (UGT74B1).